The sequence spans 331 residues: tRNA(Ile)-lysidine synthase (331 aa).

29 to 34 (SGGPDS) contributes to the ATP binding site.

Belongs to the tRNA(Ile)-lysidine synthase family.

The protein resides in the cytoplasm. It carries out the reaction cytidine(34) in tRNA(Ile2) + L-lysine + ATP = lysidine(34) in tRNA(Ile2) + AMP + diphosphate + H(+). In terms of biological role, ligates lysine onto the cytidine present at position 34 of the AUA codon-specific tRNA(Ile) that contains the anticodon CAU, in an ATP-dependent manner. Cytidine is converted to lysidine, thus changing the amino acid specificity of the tRNA from methionine to isoleucine. The protein is tRNA(Ile)-lysidine synthase of Chlorobaculum tepidum (strain ATCC 49652 / DSM 12025 / NBRC 103806 / TLS) (Chlorobium tepidum).